Reading from the N-terminus, the 568-residue chain is Sphingosine-1-phosphate lyase 1 (568 aa).

Residues 1–40 (MPSTDLLMLKAFEPYLEILEVYSTKAKNYVNGHCTKYEPW) are Lumenal-facing. A helical; Signal-anchor for type III membrane protein transmembrane segment spans residues 41 to 61 (QLIAWSVVWTLLIVWGYEFVF). Topologically, residues 62 to 568 (QPESLWSRFK…SQMNGSPKPH (507 aa)) are cytoplasmic. An N6-(pyridoxal phosphate)lysine; alternate modification is found at Lys353. Residue Lys353 is modified to N6-acetyllysine; alternate. 3'-nitrotyrosine is present on residues Tyr356 and Tyr366. At Ser564 the chain carries Phosphoserine.

The protein belongs to the group II decarboxylase family. Sphingosine-1-phosphate lyase subfamily. In terms of assembly, homodimer. Pyridoxal 5'-phosphate serves as cofactor. In terms of tissue distribution, ubiquitously expressed. Expressed in fetal and adult adrenal gland (at protein level).

It is found in the endoplasmic reticulum membrane. It carries out the reaction sphinganine 1-phosphate = hexadecanal + phosphoethanolamine. The enzyme catalyses sphing-4-enine 1-phosphate = (2E)-hexadecenal + phosphoethanolamine. It participates in lipid metabolism; sphingolipid metabolism. Functionally, cleaves phosphorylated sphingoid bases (PSBs), such as sphingosine-1-phosphate, into fatty aldehydes and phosphoethanolamine. Elevates stress-induced ceramide production and apoptosis. Required for global lipid homeostasis in liver and cholesterol homeostasis in fibroblasts. Involved in the regulation of pro-inflammatory response and neutrophil trafficking. Modulates neuronal autophagy via phosphoethanolamine production which regulates accumulation of aggregate-prone proteins such as APP. Seems to play a role in establishing neuronal contact sites and axonal maintenance. In Homo sapiens (Human), this protein is Sphingosine-1-phosphate lyase 1.